The following is a 38-amino-acid chain: Large ribosomal subunit protein bL36 (38 aa).

Belongs to the bacterial ribosomal protein bL36 family.

This Sorangium cellulosum (strain So ce56) (Polyangium cellulosum (strain So ce56)) protein is Large ribosomal subunit protein bL36.